The chain runs to 178 residues: Dual-action ribosomal maturation protein DarP (178 aa).

The span at 1 to 14 (MTVSDHPQTVSQPD) shows a compositional bias: polar residues. Residues 1–25 (MTVSDHPQTVSQPDPESESRPSKTR) form a disordered region.

It belongs to the DarP family.

Its subcellular location is the cytoplasm. Its function is as follows. Member of a network of 50S ribosomal subunit biogenesis factors which assembles along the 30S-50S interface, preventing incorrect 23S rRNA structures from forming. Promotes peptidyl transferase center (PTC) maturation. This chain is Dual-action ribosomal maturation protein DarP, found in Nitrosomonas europaea (strain ATCC 19718 / CIP 103999 / KCTC 2705 / NBRC 14298).